A 786-amino-acid polypeptide reads, in one-letter code: LPS-assembly protein LptD (786 aa).

Residues 1-39 (MPPKPLFPNVFPGDGAPRKRRLALALLAVPGLVPAVSYA) form the signal peptide. Residues 767–786 (PGYTPLPPPPPPMSRFSNYE) are disordered. A compositionally biased stretch (pro residues) spans 770–779 (TPLPPPPPPM).

Belongs to the LptD family. In terms of assembly, component of the lipopolysaccharide transport and assembly complex. Interacts with LptE and LptA.

It is found in the cell outer membrane. In terms of biological role, together with LptE, is involved in the assembly of lipopolysaccharide (LPS) at the surface of the outer membrane. The polypeptide is LPS-assembly protein LptD (Burkholderia cenocepacia (strain HI2424)).